A 78-amino-acid polypeptide reads, in one-letter code: Large ribosomal subunit protein bL28 (78 aa).

Residues 1-25 form a disordered region; sequence MSRVCQVTGKRPTVGNNRSHAKNAT.

This sequence belongs to the bacterial ribosomal protein bL28 family.

This is Large ribosomal subunit protein bL28 from Tolumonas auensis (strain DSM 9187 / NBRC 110442 / TA 4).